An 82-amino-acid chain; its full sequence is ATP synthase subunit c, chloroplastic (82 aa).

2 helical membrane-spanning segments follow: residues 3-23 (PLIA…ASIG) and 57-77 (LAFM…LLFA).

Belongs to the ATPase C chain family. As to quaternary structure, F-type ATPases have 2 components, F(1) - the catalytic core - and F(0) - the membrane proton channel. F(1) has five subunits: alpha(3), beta(3), gamma(1), delta(1), epsilon(1). F(0) has four main subunits: a(1), b(1), b'(1) and c(10-14). The alpha and beta chains form an alternating ring which encloses part of the gamma chain. F(1) is attached to F(0) by a central stalk formed by the gamma and epsilon chains, while a peripheral stalk is formed by the delta, b and b' chains.

It localises to the plastid. The protein localises to the chloroplast thylakoid membrane. F(1)F(0) ATP synthase produces ATP from ADP in the presence of a proton or sodium gradient. F-type ATPases consist of two structural domains, F(1) containing the extramembraneous catalytic core and F(0) containing the membrane proton channel, linked together by a central stalk and a peripheral stalk. During catalysis, ATP synthesis in the catalytic domain of F(1) is coupled via a rotary mechanism of the central stalk subunits to proton translocation. In terms of biological role, key component of the F(0) channel; it plays a direct role in translocation across the membrane. A homomeric c-ring of between 10-14 subunits forms the central stalk rotor element with the F(1) delta and epsilon subunits. This is ATP synthase subunit c, chloroplastic from Nephroselmis olivacea (Green alga).